The sequence spans 37 residues: Cytochrome b6-f complex subunit 5 (37 aa).

A helical transmembrane segment spans residues 5 to 25 (FLFGIVLGLIPITLAGLFVTA).

Belongs to the PetG family. In terms of assembly, the 4 large subunits of the cytochrome b6-f complex are cytochrome b6, subunit IV (17 kDa polypeptide, PetD), cytochrome f and the Rieske protein, while the 4 small subunits are PetG, PetL, PetM and PetN. The complex functions as a dimer.

It localises to the plastid. Its subcellular location is the chloroplast thylakoid membrane. Its function is as follows. Component of the cytochrome b6-f complex, which mediates electron transfer between photosystem II (PSII) and photosystem I (PSI), cyclic electron flow around PSI, and state transitions. PetG is required for either the stability or assembly of the cytochrome b6-f complex. This chain is Cytochrome b6-f complex subunit 5, found in Platanus occidentalis (Sycamore).